Consider the following 562-residue polypeptide: Potassium-transporting ATPase potassium-binding subunit (562 aa).

12 consecutive transmembrane segments (helical) span residues 5 to 25, 65 to 85, 135 to 155, 181 to 201, 257 to 277, 283 to 303, 331 to 351, 358 to 378, 381 to 401, 422 to 442, 486 to 506, and 528 to 548; these read GILAIFLVVLALVACAWPLGG, AYLRAMMVSNLVMALFAYAVF, IGITFLQFTSAATGLAAAMAF, LLLPIAAILAVLLLALGVPET, ILEIMGMGLIPTALVFTAGHF, LAIVLCTLLGAILLAGAYIVY, FGLPLTSLFVAATTAYTTGAV, LMPLSGMVPLLFMMFNLIFGG, VGLLNILMFLIIAVFISGLMV, AAMLVHPFVILVPTAIAMALP, ISIGLVMLFGRYVSIIAMLAI, and FAFGYVFVAVFIIVGALTFFP.

It belongs to the KdpA family. The system is composed of three essential subunits: KdpA, KdpB and KdpC.

The protein localises to the cell membrane. Its function is as follows. Part of the high-affinity ATP-driven potassium transport (or Kdp) system, which catalyzes the hydrolysis of ATP coupled with the electrogenic transport of potassium into the cytoplasm. This subunit binds the extracellular potassium ions and delivers the ions to the membrane domain of KdpB through an intramembrane tunnel. In Alicyclobacillus acidocaldarius subsp. acidocaldarius (strain ATCC 27009 / DSM 446 / BCRC 14685 / JCM 5260 / KCTC 1825 / NBRC 15652 / NCIMB 11725 / NRRL B-14509 / 104-IA) (Bacillus acidocaldarius), this protein is Potassium-transporting ATPase potassium-binding subunit.